The sequence spans 399 residues: Acetate kinase (399 aa).

N8 contacts Mg(2+). Position 15 (K15) interacts with ATP. R89 contributes to the substrate binding site. The Proton donor/acceptor role is filled by D147. Residues 207-211 (HMGNG), 284-286 (DMR), and 332-336 (GIGEN) contribute to the ATP site. Mg(2+) is bound at residue E385.

Belongs to the acetokinase family. Homodimer. Requires Mg(2+) as cofactor. It depends on Mn(2+) as a cofactor.

It localises to the cytoplasm. The catalysed reaction is acetate + ATP = acetyl phosphate + ADP. It functions in the pathway metabolic intermediate biosynthesis; acetyl-CoA biosynthesis; acetyl-CoA from acetate: step 1/2. Its function is as follows. Catalyzes the formation of acetyl phosphate from acetate and ATP. Can also catalyze the reverse reaction. The protein is Acetate kinase of Streptococcus mutans serotype c (strain ATCC 700610 / UA159).